The sequence spans 495 residues: Fusicoccadiene 8-ol C-16 hydroxylase (495 aa).

A helical transmembrane segment spans residues 12 to 32; sequence VLLALIVWIGTTIIYNIYFHP. N-linked (GlcNAc...) asparagine glycosylation is found at Asn-249 and Asn-317. Cys-439 provides a ligand contact to heme.

The protein belongs to the cytochrome P450 family. Heme is required as a cofactor.

It localises to the membrane. The protein operates within mycotoxin biosynthesis. Its function is as follows. Cytochrome P450 monooxygenase; part of the gene cluster that mediates the biosynthesis of the diterpene glucoside brassicicene C. In the first step of the brassicicene C biosynthesis, the bifunctional diterpene synthase bsc8 that possesses both prenyl transferase and terpene cyclase activity, converts isopentenyl diphosphate and dimethylallyl diphosphate into geranylgeranyl diphosphate (GGDP) that is further converted into fusicocca-2,10(14)-diene, the first precursor for brassicicene C. Fusicocca-2,10(14)-diene is then substrate of cytochrome P450 monooxygenase bsc1 for hydroxylation at the C-8 position. Oxidation at C-16 position to aldehyde is then catalyzed by the cytochrome P450 monooyxygenase bsc7, yielding fusicocca-2,10(14)-diene-8-beta,16-diol. Follows the isomerization of the double bond and reduction of aldehyde to alcohol catalyzed by the short-chain dehydrogenase/reductase bsc3 to yield the diol compound fusicocca-1,10(14)-diene-8 beta,16-diol. The next step is the oxidation at the C-3 position of fusicocca-2,10(14)-diene-8-beta,16-diol catalyzed by the alpha-ketoglutarate dependent dioxygenase bsc9, to produce a triol compound. Methylation of the hydroxy group at position 16 is performed by the methyltransferase bsc6. 16-O-methylation is followed by oxidation at the C-13 position to ketone and an alkyl shift of the methyl group leads to brassicicene C. Although the probable acetyltransferase bsc4 is included in the gene cluster, no acetylation reactions are necessary for brassicicene C biosynthesis. However, the fact that brassicicene E, which is a structurally related compound having an acetoxy group at position 12, was previously isolated from another strain of A.brassicicola suggests that the ATCC 96836 strain might also produce a small amount of brassicicene E. In Alternaria brassicicola (Dark leaf spot agent), this protein is Fusicoccadiene 8-ol C-16 hydroxylase.